The primary structure comprises 360 residues: MGRCTALHEEHLALGARMTEFSGWELPLHYGSQIAEHHAVRRAAGMFDVSHLGVVDVEGLQAAPFLRRVLANDVARLAEPGRMLYGCMLNQDGGIVDDLVVGFIDDRRFRLILNAGTREKDLSWLHRQAAPFSVTVTPRDDLAMIALQGPDSPRIADAVVAAGSSGLKPFTATQRGDRFIARTGYTGEDGFEIILPHAEAGSLWRQLFQAGARPCGLGARDTLRLEAGMRLYGQDMDETVTPLACGLGWTVAWEPEERDFIGRAALERERIGGSPSKFVGLILEEPGILRSGQKVAVANVGEGVVTSGGFSPTLRRSIGLARVPAATGRECRVEIRGSLKRATVVKPRFVRRSTSLIDIC.

Belongs to the GcvT family. The glycine cleavage system is composed of four proteins: P, T, L and H.

It carries out the reaction N(6)-[(R)-S(8)-aminomethyldihydrolipoyl]-L-lysyl-[protein] + (6S)-5,6,7,8-tetrahydrofolate = N(6)-[(R)-dihydrolipoyl]-L-lysyl-[protein] + (6R)-5,10-methylene-5,6,7,8-tetrahydrofolate + NH4(+). Its function is as follows. The glycine cleavage system catalyzes the degradation of glycine. The protein is Aminomethyltransferase of Methylococcus capsulatus (strain ATCC 33009 / NCIMB 11132 / Bath).